The sequence spans 278 residues: Probable endonuclease 4 (278 aa).

Zn(2+)-binding residues include H70, H108, E143, D176, H179, H210, D223, H225, and E255.

The protein belongs to the AP endonuclease 2 family. Zn(2+) serves as cofactor.

The enzyme catalyses Endonucleolytic cleavage to 5'-phosphooligonucleotide end-products.. Its function is as follows. Endonuclease IV plays a role in DNA repair. It cleaves phosphodiester bonds at apurinic or apyrimidinic (AP) sites, generating a 3'-hydroxyl group and a 5'-terminal sugar phosphate. This chain is Probable endonuclease 4, found in Mycoplasmopsis agalactiae (strain NCTC 10123 / CIP 59.7 / PG2) (Mycoplasma agalactiae).